Here is a 774-residue protein sequence, read N- to C-terminus: Cleavage and polyadenylation specificity factor subunit 3 (774 aa).

Residues 1–26 (MHHNNHHHGHHGRYQHHHNQHLKRPL) are compositionally biased toward basic residues. A disordered region spans residues 1–30 (MHHNNHHHGHHGRYQHHHNQHLKRPLKGGT). The Zn(2+) site is built by H97, H99, D101, H102, H185, and D206. H423 serves as the catalytic Proton donor. Zn(2+) is bound at residue H445. The interval 636–665 (KEEITKDDIEKEKEKEKEQQDGDDDDDDEI) is disordered. Basic and acidic residues predominate over residues 638–655 (EITKDDIEKEKEKEKEQQ).

This sequence belongs to the metallo-beta-lactamase superfamily. RNA-metabolizing metallo-beta-lactamase-like family. CPSF3 subfamily. Component of the cleavage and polyadenylation specificity factor (CPSF) complex. The cofactor is Zn(2+).

The protein localises to the nucleus. In terms of biological role, component of the cleavage and polyadenylation specificity factor (CPSF) complex that play a key role in pre-mRNA 3'-end formation, recognizing the AAUAAA signal sequence and interacting with poly(A) polymerase and other factors to bring about cleavage and poly(A) addition. Has endonuclease activity, and functions as an mRNA 3'-end-processing endonuclease. The polypeptide is Cleavage and polyadenylation specificity factor subunit 3 (cpsf3) (Dictyostelium discoideum (Social amoeba)).